Here is a 174-residue protein sequence, read N- to C-terminus: MDNGIFIVATIFIVNILYVTIYTVRLLLTMKGYRYLAALSSVFEMIIYVVALSLVLDNLNNIANVLAYAIGFGVGIIVGMKIEERIALGYITVNVITKEYNLDLPNQIRDLGYGVTSWLASGRDGERMMLEILTQRKNERKLYKHIIEIDNGAFIVSSEPKQIHGGFWVKQVRK.

Transmembrane regions (helical) follow at residues Gly-4–Val-24, Leu-36–Leu-56, and Ile-62–Ile-82.

This sequence belongs to the UPF0316 family.

It localises to the cell membrane. This chain is UPF0316 protein LMOf2365_1801, found in Listeria monocytogenes serotype 4b (strain F2365).